Consider the following 207-residue polypeptide: Guanylate kinase (207 aa).

Residues 4 to 184 enclose the Guanylate kinase-like domain; sequence GTLYIVSAPS…ALTDLKTIIR (181 aa). 11–18 contacts ATP; it reads APSGAGKS.

It belongs to the guanylate kinase family.

It localises to the cytoplasm. The enzyme catalyses GMP + ATP = GDP + ADP. Essential for recycling GMP and indirectly, cGMP. The polypeptide is Guanylate kinase (Escherichia coli O157:H7).